Here is a 63-residue protein sequence, read N- to C-terminus: Synergistic-type venom protein C9S3, chain 2 (63 aa).

3 cysteine pairs are disulfide-bonded: Cys-3–Cys-24, Cys-17–Cys-42, and Cys-46–Cys-57.

The protein belongs to the three-finger toxin family. Short-chain subfamily. Aminergic toxin sub-subfamily. In terms of assembly, heterodimer of C9S3 chain 1 (AC P01408) and chain 2, linked by at least two disulfide bonds. As to expression, expressed by the venom gland.

It is found in the secreted. This protein shows a synergetic toxic effect in that it enhances the toxicity of other D.angusticeps toxins. The polypeptide is Synergistic-type venom protein C9S3, chain 2 (Dendroaspis angusticeps (Eastern green mamba)).